A 180-amino-acid chain; its full sequence is Putative adenylate kinase (180 aa).

ATP is bound by residues glycine 10, glycine 12, lysine 13, threonine 14, and threonine 15. The interval serine 30 to isoleucine 50 is NMP. An LID region spans residues alanine 99–glutamate 109. Residues arginine 100 and lysine 138 each coordinate ATP.

The protein belongs to the adenylate kinase family. AK6 subfamily. As to quaternary structure, interacts with uS11. Not a structural component of 40S pre-ribosomes, but transiently interacts with them by binding to uS11.

It catalyses the reaction AMP + ATP = 2 ADP. The enzyme catalyses ATP + H2O = ADP + phosphate + H(+). In terms of biological role, broad-specificity nucleoside monophosphate (NMP) kinase that catalyzes the reversible transfer of the terminal phosphate group between nucleoside triphosphates and monophosphates. Also has ATPase activity. Involved in the late maturation steps of the 30S ribosomal particles, specifically 16S rRNA maturation. While NMP activity is not required for ribosome maturation, ATPase activity is. Associates transiently with small ribosomal subunit protein uS11. ATP hydrolysis breaks the interaction with uS11. May temporarily remove uS11 from the ribosome to enable a conformational change of the ribosomal RNA that is needed for the final maturation step of the small ribosomal subunit. The sequence is that of Putative adenylate kinase from Thermococcus onnurineus (strain NA1).